Consider the following 103-residue polypeptide: Histone H4, major (103 aa).

Positions 1-12 (MAGGKGGKGMGK) are enriched in gly residues. Positions 1–29 (MAGGKGGKGMGKVGAKRHSKRSNKASIEG) are disordered. An N6-acetyllysine mark is found at Lys5, Lys8, Lys12, and Lys16. Residues 14–23 (GAKRHSKRSN) are compositionally biased toward basic residues. Residues 16 to 21 (KRHSKR) mediate DNA binding.

The protein belongs to the histone H4 family. In terms of assembly, the nucleosome is a histone octamer containing two molecules each of H2A, H2B, H3 and H4 assembled in one H3-H4 heterotetramer and two H2A-H2B heterodimers. The octamer wraps approximately 147 bp of DNA.

It is found in the nucleus. It localises to the chromosome. Functionally, core component of nucleosome. Nucleosomes wrap and compact DNA into chromatin, limiting DNA accessibility to the cellular machineries which require DNA as a template. Histones thereby play a central role in transcription regulation, DNA repair, DNA replication and chromosomal stability. DNA accessibility is regulated via a complex set of post-translational modifications of histones, also called histone code, and nucleosome remodeling. The polypeptide is Histone H4, major (Tetrahymena pyriformis).